We begin with the raw amino-acid sequence, 180 residues long: Geminin homolog (180 aa).

Over residues 1–27 (MSRIGLQQLNNSARNSPFGSEKATGTK) the composition is skewed to polar residues. The tract at residues 1–29 (MSRIGLQQLNNSARNSPFGSEKATGTKQI) is disordered.

The protein belongs to the geminin family. Homodimer. Interacts with cdt-1; the interaction most likely inhibits the ability of cdt-1 to load the mini-chromosome maintenance (MCM) complex onto DNA and therefore reduces DNA replication licensing activity. Interacts with nob-1 and ceh-32.

It is found in the cytoplasm. It localises to the nucleus. Inhibits DNA replication by binding to the DNA replication licensing factor cdt-1. Its interaction with cdt-1 prevents the cdt-1 loading of the mini-chromosome maintenance (MCM) complex onto DNA and therefore DNA replication licencing. In Caenorhabditis elegans, this protein is Geminin homolog.